A 75-amino-acid polypeptide reads, in one-letter code: Sec-independent protein translocase protein TatA (75 aa).

A helical transmembrane segment spans residues 1–21; it reads MGGISIWQLLIIVAIIVLLFG. The interval 50 to 75 is disordered; the sequence is DAEFKSLNKDESATAGSEKVKDKEQA.

This sequence belongs to the TatA/E family. The Tat system comprises two distinct complexes: a TatABC complex, containing multiple copies of TatA, TatB and TatC subunits, and a separate TatA complex, containing only TatA subunits. Substrates initially bind to the TatABC complex, which probably triggers association of the separate TatA complex to form the active translocon.

It localises to the cell inner membrane. Its function is as follows. Part of the twin-arginine translocation (Tat) system that transports large folded proteins containing a characteristic twin-arginine motif in their signal peptide across membranes. TatA could form the protein-conducting channel of the Tat system. The chain is Sec-independent protein translocase protein TatA from Mannheimia succiniciproducens (strain KCTC 0769BP / MBEL55E).